Reading from the N-terminus, the 153-residue chain is Superoxide dismutase [Cu-Zn] (153 aa).

Cu cation contacts are provided by histidine 46, histidine 48, and histidine 63. Cysteine 57 and cysteine 146 are oxidised to a cystine. The interval 61 to 80 (GPHFNPFGKEHGAPEDENRH) is disordered. Residues histidine 63, histidine 71, histidine 80, and aspartate 83 each contribute to the Zn(2+) site. The segment covering 68-80 (GKEHGAPEDENRH) has biased composition (basic and acidic residues). Residue histidine 120 participates in Cu cation binding. Positions 124 to 136 (DDLGRSEHPESKK) are enriched in basic and acidic residues. Residues 124–143 (DDLGRSEHPESKKTGNAGAR) are disordered. Residue arginine 143 participates in substrate binding.

Belongs to the Cu-Zn superoxide dismutase family. As to quaternary structure, homodimer. It depends on Cu cation as a cofactor. The cofactor is Zn(2+).

Its subcellular location is the cytoplasm. It catalyses the reaction 2 superoxide + 2 H(+) = H2O2 + O2. Its function is as follows. Destroys radicals which are normally produced within the cells and which are toxic to biological systems. This Aspergillus flavus protein is Superoxide dismutase [Cu-Zn] (sodC).